Consider the following 572-residue polypeptide: MSRLEIALSSTPEHLLKHLLLGTVLLTSLYALYRRLLPKPLPGIPFNQKSAQSIWGDVLELRDDPSGLAKWCSKQLENHGSPICQALMGPLSKPVVLVADVGNAREMLMGRSDFDRSAYIIDRFPLFGEFHLNMKTGDNWRQSRNWLKDLLAPQYLHNVAGPAIHSSVLKLIELWQHKFHVGDGRVFSMVSDLKTLALDVIVAFHFGSDFQDSALDRQIDHVGKLDGSKLPSGEYNEVEFSKAPLHEFQQGLTDVGDKMAAIYTTKWPPLLVAWWVRYVSPYYRPFFEAKDRFIRKHINLAVRRCRSDEDPSTGIDYMVHREEKAARKARREPVFDKQIMVDEAYGNLIAGQHTTSAALVWILKLLADYPSVQEKLREELQGIFDSAMQENRLPTAAEIIKSKLPYLDAVLEETLRLRAAMLVPRDAAKDTELLGHRIPKGTVVLLVCQGPDYKPSPPSKYWSDVKASRMYPGKGNPDLEIFDPERWLVRNEKGDLEFDGSSYPQLAFGLGIRSCWGRRLAMVEMRIMTTLMILKFELKDVPKGLRGHEASYDISYRAKKGFLHLKSRGEFP.

Position 515 (Cys515) interacts with heme.

This sequence belongs to the cytochrome P450 family. Heme serves as cofactor.

Its pathway is secondary metabolite biosynthesis. Its function is as follows. Cytochrome P450 monooxygenase; part of the gene cluster that mediates the biosynthesis of the 6-methyl-2-pyrone derivative xylariolide D. XilC hydroxylates the 5-alkyl-6-methyl-2-pyrone backbone called prexylariolide D, produced by the highly reducing polyketide synthase xilA, on its side chain to form xylariolide D. This Penicillium rubens (strain ATCC 28089 / DSM 1075 / NRRL 1951 / Wisconsin 54-1255) (Penicillium chrysogenum) protein is Cytochrome P450 monooxygenase xilC.